A 355-amino-acid chain; its full sequence is Syntaxin-5 (355 aa).

Residues 1–333 lie on the Cytoplasmic side of the membrane; it reads MIPRKRYGSK…KYFQSVTSNR (333 aa). The IxM motif; signal for cargo packaging into COPII-coated vesicles signature appears at 245–247; that stretch reads IDM. The region spanning 263-325 is the t-SNARE coiled-coil homology domain; sequence DSYIQSRADT…EAAHSEILKY (63 aa). The stretch at 287–318 forms a coiled coil; it reads FQQLAHMVKEQEETIQRIDENVLGAQLDVEAA. A helical; Anchor for type IV membrane protein transmembrane segment spans residues 334–354; sequence WLMVKIFLILIVFFIIFVVFL. Residue Ala-355 is a topological domain, vesicular.

Belongs to the syntaxin family. In terms of assembly, part of a ternary complex containing STX5A, NSFL1C and VCP. Part of a unique SNARE complex composed of the Golgi SNAREs GOSR1, GOSR2 and YKT6. This complex also includes VTI1A. Component of a SNARE complex consisting of STX5, YKT6, GOSR1 and BET1L. Interacts with BET1L. Interacts with BET1. Interacts with COG4. Interacts with GM130/GOLGA2. Interacts (via IxM motif) with SEC24C and SEC24D; mediates STX5 packaging into COPII-coated vesicles. Interacts with VLDLR; this interaction mediates VLDLR translocation from the endoplasmic reticulum to the plasma membrane. As to expression, expressed in the brain, heart, spleen, lung, liver, kidney and testis.

It localises to the endoplasmic reticulum-Golgi intermediate compartment membrane. It is found in the golgi apparatus membrane. Mediates endoplasmic reticulum to Golgi transport. Together with p115/USO1 and GM130/GOLGA2, involved in vesicle tethering and fusion at the cis-Golgi membrane to maintain the stacked and inter-connected structure of the Golgi apparatus. Its function is as follows. Required for Golgi to endoplasmic reticulum retrogade transport, and for intra-Golgi transport. The polypeptide is Syntaxin-5 (Stx5) (Rattus norvegicus (Rat)).